A 90-amino-acid polypeptide reads, in one-letter code: Probable Fe(2+)-trafficking protein (90 aa).

The protein belongs to the Fe(2+)-trafficking protein family. Monomer.

Functionally, could be a mediator in iron transactions between iron acquisition and iron-requiring processes, such as synthesis and/or repair of Fe-S clusters in biosynthetic enzymes. The chain is Probable Fe(2+)-trafficking protein from Enterobacter sp. (strain 638).